The sequence spans 858 residues: DNA mismatch repair protein MutS (858 aa).

613–620 is an ATP binding site; sequence GPNMAGKS.

Belongs to the DNA mismatch repair MutS family.

Its function is as follows. This protein is involved in the repair of mismatches in DNA. It is possible that it carries out the mismatch recognition step. This protein has a weak ATPase activity. The sequence is that of DNA mismatch repair protein MutS from Dehalococcoides mccartyi (strain CBDB1).